The chain runs to 241 residues: Probable WRKY transcription factor 63 (241 aa).

Residues 56–79 are disordered; the sequence is NSPNRQPHHESSSRDMAGLVPQRS. The WRKY DNA-binding region spans 97–165; it reads SPNPRLDDGF…YLGQHTCKAF (69 aa).

It belongs to the WRKY group III family.

The protein resides in the nucleus. Transcription factor. Interacts specifically with the W box (5'-(T)TGAC[CT]-3'), a frequently occurring elicitor-responsive cis-acting element. The chain is Probable WRKY transcription factor 63 (WRKY63) from Arabidopsis thaliana (Mouse-ear cress).